The sequence spans 452 residues: Oxygen-independent coproporphyrinogen III oxidase (452 aa).

Positions 45 to 278 (LDPAVPISVY…ANLAAKMFTE (234 aa)) constitute a Radical SAM core domain. Y54 contributes to the S-adenosyl-L-methionine binding site. C60 and C64 together coordinate [4Fe-4S] cluster. S-adenosyl-L-methionine is bound at residue F66. Position 67 (C67) interacts with [4Fe-4S] cluster. Residues G111, 112–113 (GT), E144, Q171, R183, D208, A242, and I328 each bind S-adenosyl-L-methionine.

It belongs to the anaerobic coproporphyrinogen-III oxidase family. In terms of assembly, monomer. The cofactor is [4Fe-4S] cluster.

Its subcellular location is the cytoplasm. The catalysed reaction is coproporphyrinogen III + 2 S-adenosyl-L-methionine = protoporphyrinogen IX + 2 5'-deoxyadenosine + 2 L-methionine + 2 CO2. It functions in the pathway porphyrin-containing compound metabolism; protoporphyrin-IX biosynthesis; protoporphyrinogen-IX from coproporphyrinogen-III (AdoMet route): step 1/1. Functionally, involved in the heme and chlorophyll biosynthesis. Catalyzes the anaerobic oxidative decarboxylation of propionate groups of rings A and B of coproporphyrinogen III to yield the vinyl groups in protoporphyrinogen IX. The polypeptide is Oxygen-independent coproporphyrinogen III oxidase (hemN) (Cereibacter sphaeroides (strain ATCC 17025 / ATH 2.4.3) (Rhodobacter sphaeroides)).